We begin with the raw amino-acid sequence, 335 residues long: Aliphatic sulfonates import ATP-binding protein SsuB (335 aa).

One can recognise an ABC transporter domain in the interval 74 to 293 (VRLTRVSKRY…ARASAAFAAL (220 aa)). ATP is bound at residue 106-113 (GRSGCGKS). Residues 308–335 (APAAPNAAGPEGASRGRAAPASGLRWAV) are disordered.

Belongs to the ABC transporter superfamily. Aliphatic sulfonates importer (TC 3.A.1.17.2) family. As to quaternary structure, the complex is composed of two ATP-binding proteins (SsuB), two transmembrane proteins (SsuC) and a solute-binding protein (SsuA).

Its subcellular location is the cell inner membrane. The enzyme catalyses ATP + H2O + aliphatic sulfonate-[sulfonate-binding protein]Side 1 = ADP + phosphate + aliphatic sulfonateSide 2 + [sulfonate-binding protein]Side 1.. Functionally, part of the ABC transporter complex SsuABC involved in aliphatic sulfonates import. Responsible for energy coupling to the transport system. The chain is Aliphatic sulfonates import ATP-binding protein SsuB from Burkholderia mallei (strain ATCC 23344).